The following is a 120-amino-acid chain: Glycine cleavage system H protein (120 aa).

The Lipoyl-binding domain occupies I17–K99. An N6-lipoyllysine modification is found at K58.

Belongs to the GcvH family. In terms of assembly, the glycine cleavage system is composed of four proteins: P, T, L and H. (R)-lipoate is required as a cofactor.

In terms of biological role, the glycine cleavage system catalyzes the degradation of glycine. The H protein shuttles the methylamine group of glycine from the P protein to the T protein. In Agrobacterium fabrum (strain C58 / ATCC 33970) (Agrobacterium tumefaciens (strain C58)), this protein is Glycine cleavage system H protein.